The chain runs to 526 residues: Glucose-6-phosphate isomerase (526 aa).

Residue E323 is the Proton donor of the active site. Active-site residues include H352 and K454.

Belongs to the GPI family.

It localises to the cytoplasm. The enzyme catalyses alpha-D-glucose 6-phosphate = beta-D-fructose 6-phosphate. It functions in the pathway carbohydrate biosynthesis; gluconeogenesis. Its pathway is carbohydrate degradation; glycolysis; D-glyceraldehyde 3-phosphate and glycerone phosphate from D-glucose: step 2/4. Catalyzes the reversible isomerization of glucose-6-phosphate to fructose-6-phosphate. This is Glucose-6-phosphate isomerase from Prochlorococcus marinus subsp. pastoris (strain CCMP1986 / NIES-2087 / MED4).